The chain runs to 171 residues: Glucagon family neuropeptides (171 aa).

The signal sequence occupies residues 1–22 (MYRKALLVWLLVYGIMRCTVHS). A propeptide spanning residues 23 to 76 (SPTALKYPALRLEDEVYDEDGNTLPDFAFDNNPIGIGNPASVFDDMYSFYYPAE) is cleaved from the precursor. The segment at 145–153 (VKKYLAAVL) is important for receptor binding. Position 164 is a lysine amide (Lys-164). The propeptide occupies 168 to 171 (VAYL).

This sequence belongs to the glucagon family.

The protein localises to the secreted. In terms of biological role, primary role of GRF is to release GH from the pituitary. PACAP is a neuropeptide involved in diverse array of physiological processes through activating the PACAP subfamily of class B1 G protein-coupled receptors: VIP receptor 1 (VIPR1), VIP receptor 2 (VIPR2), and PACAP type I receptor (ADCYAP1R1). Exerts neuroprotective and general cytoprotective effects due to anti-apoptotic, anti-inflammatory, and antioxidant actions. This is Glucagon family neuropeptides (adcyap1) from Pelophylax ridibundus (Marsh frog).